Consider the following 469-residue polypeptide: Ribosomal protein uS12 methylthiotransferase RimO (469 aa).

Residues 1–115 enclose the MTTase N-terminal domain; that stretch reads MKFHIITLGC…IGSVVAGGVA (115 aa). [4Fe-4S] cluster contacts are provided by Cys-10, Cys-46, Cys-78, Cys-180, Cys-184, and Cys-187. In terms of domain architecture, Radical SAM core spans 166 to 398; it reads NKRGPSAYLK…MAVQQVISRA (233 aa). In terms of domain architecture, TRAM spans 401–469; sequence ARFVGQTMKV…TDYDLWGEIV (69 aa).

The protein belongs to the methylthiotransferase family. RimO subfamily. Requires [4Fe-4S] cluster as cofactor.

Its subcellular location is the cytoplasm. It carries out the reaction L-aspartate(89)-[ribosomal protein uS12]-hydrogen + (sulfur carrier)-SH + AH2 + 2 S-adenosyl-L-methionine = 3-methylsulfanyl-L-aspartate(89)-[ribosomal protein uS12]-hydrogen + (sulfur carrier)-H + 5'-deoxyadenosine + L-methionine + A + S-adenosyl-L-homocysteine + 2 H(+). Catalyzes the methylthiolation of an aspartic acid residue of ribosomal protein uS12. In Herpetosiphon aurantiacus (strain ATCC 23779 / DSM 785 / 114-95), this protein is Ribosomal protein uS12 methylthiotransferase RimO.